A 322-amino-acid chain; its full sequence is MAVVSTSLASQITNPNSAVSTQFSGLRRSFLKLENSVSTQSSFFQNVDSHLRLSSSSRRCPRGVVAMAGSGKFFVGGNWKCNGTKESITKLVSDLNSATLEADVDVVVAPPFVYIDQVKSSLTGRVEISAQNCWIGKGGAFTGEISVEQLKDLGCQWVILGHSERRHVIGEQNEFIGKKAAYALNQGVGVIACIGELLEEREAGKTFDVCYQQLKAFADALPSWDNVVVAYEPVWAIGTGKVASPDQAQEVHVAVRDWLKKNVSEEVASKTRIIYGGSVNGGNCAELAKQEDIDGFLVGGASLKGPEFATIVNSVTAKKVAA.

The N-terminal 67 residues, 1 to 67, are a transit peptide targeting the chloroplast; it reads MAVVSTSLAS…RRCPRGVVAM (67 aa). 2 residues coordinate substrate: Asn-78 and Lys-80. His-162 functions as the Electrophile in the catalytic mechanism. Glu-232 serves as the catalytic Proton acceptor.

The protein belongs to the triosephosphate isomerase family. As to quaternary structure, homodimer.

Its subcellular location is the plastid. The protein localises to the chloroplast. It carries out the reaction D-glyceraldehyde 3-phosphate = dihydroxyacetone phosphate. The protein operates within carbohydrate biosynthesis; Calvin cycle. This chain is Triosephosphate isomerase, chloroplastic (TPIP1), found in Spinacia oleracea (Spinach).